Consider the following 300-residue polypeptide: UDP-3-O-acyl-N-acetylglucosamine deacetylase (300 aa).

Zn(2+) is bound by residues H76, H235, and D239. Residue H262 is the Proton donor of the active site.

This sequence belongs to the LpxC family. Requires Zn(2+) as cofactor.

It catalyses the reaction a UDP-3-O-[(3R)-3-hydroxyacyl]-N-acetyl-alpha-D-glucosamine + H2O = a UDP-3-O-[(3R)-3-hydroxyacyl]-alpha-D-glucosamine + acetate. The protein operates within glycolipid biosynthesis; lipid IV(A) biosynthesis; lipid IV(A) from (3R)-3-hydroxytetradecanoyl-[acyl-carrier-protein] and UDP-N-acetyl-alpha-D-glucosamine: step 2/6. Its function is as follows. Catalyzes the hydrolysis of UDP-3-O-myristoyl-N-acetylglucosamine to form UDP-3-O-myristoylglucosamine and acetate, the committed step in lipid A biosynthesis. The sequence is that of UDP-3-O-acyl-N-acetylglucosamine deacetylase from Halorhodospira halophila (strain DSM 244 / SL1) (Ectothiorhodospira halophila (strain DSM 244 / SL1)).